The primary structure comprises 296 residues: SHSP domain-containing protein CPUR_05420 (296 aa).

The tract at residues 50-83 is disordered; it reads AWQTCPQQRHPHQPDVSGPPGSGFGEQPSQDTPN. In terms of domain architecture, sHSP spans 169-296; sequence ETKKSFTPDI…GKGVKEITIV (128 aa).

Belongs to the small heat shock protein (HSP20) family.

In terms of biological role, monooxygenase; part of the ergochrome gene cluster responsible for the typical purple-black color of the ergot sclerotia. The ergochrome gene cluster produces several ergot pigments including the yellow ergochrome secalonic acid and its derivatives, as well as the red anthraquinones endocrocin and clavorubin. The pathway begins with the synthesis of atrochrysone thioester by the polyketide synthase (PKS) CPUR_05437. The atrochrysone carboxyl ACP thioesterase CPUR_05436 then breaks the thioester bond and releases the atrochrysone carboxylic acid from CPUR_05437. The atrochrysone carboxylic acid is then converted to atrochrysone which is further transformed into emodin anthrone. The next step is performed by the anthrone oxygenase CPUR_05434 that catalyzes the oxidation of emodinanthrone to emodin. Emodin is further modified to yield monodictyphenone via several steps involving CPUR_05427, CPUR_05428, CPUR_05429 and CPUR_05430. The short chain dehydrogenase/reductase CPUR_05418 then catalyzes the C-5 ketoreduction to give the xanthone skeleton of the monomeric units. Ergochromes formation requires further dimerization steps of different xanthone units, probably catalyzed by the cytochrome P450 monooxygenase CPUR_05419. CPUR_05425, CPUR_05426 and CPUR_05431 are unique to Claviceps, thus it is likely that they are involved in further modification of xanthone units or in their dimerization. The yellow ergochromes and the red anthraquinone pigments endocrocin and clavorubin are products from the same PKS derived precursors and the latter are likely shunt products in the pathway of xanthone biosynthesis. It is proposed that atrochrysone carboxylic acid released from the PKS CPUR_05437 can also be converted to endocrocin anthrone which is further oxidized into endocrocin by CPUR_05435. Endocrocin could be then modified to clavorubin, possibly by CPUR_05423 and CPUR_05431. Clavorubin is the principal anthraquinone metabolite produced by the cluster with a much higher yield compared to endocrocin. The chain is SHSP domain-containing protein CPUR_05420 from Claviceps purpurea (strain 20.1) (Ergot fungus).